A 634-amino-acid chain; its full sequence is Extracellular metalloproteinase MEP (634 aa).

The first 18 residues, 1–18 (MRGLLLAGALALPASVFA), serve as a signal peptide directing secretion. The propeptide occupies 19-245 (HPAHQSYGLN…IHGVVDYVAE (227 aa)). Zn(2+) is bound at residue His429. The active site involves Glu430. Residue His433 participates in Zn(2+) binding.

This sequence belongs to the peptidase M36 family. Zn(2+) is required as a cofactor.

Its subcellular location is the secreted. In terms of biological role, secreted metalloproteinase that allows assimilation of proteinaceous substrates and probably acts as a virulence factor. The protein is Extracellular metalloproteinase MEP (MEP) of Neosartorya fischeri (strain ATCC 1020 / DSM 3700 / CBS 544.65 / FGSC A1164 / JCM 1740 / NRRL 181 / WB 181) (Aspergillus fischerianus).